The sequence spans 142 residues: Large ribosomal subunit protein uL13 (142 aa).

It belongs to the universal ribosomal protein uL13 family. Part of the 50S ribosomal subunit.

In terms of biological role, this protein is one of the early assembly proteins of the 50S ribosomal subunit, although it is not seen to bind rRNA by itself. It is important during the early stages of 50S assembly. The protein is Large ribosomal subunit protein uL13 of Buchnera aphidicola subsp. Acyrthosiphon pisum (strain 5A).